A 219-amino-acid chain; its full sequence is Elongation factor Ts (219 aa).

Positions 82 to 85 (TDFV) are involved in Mg(2+) ion dislocation from EF-Tu.

This sequence belongs to the EF-Ts family.

The protein resides in the cytoplasm. In terms of biological role, associates with the EF-Tu.GDP complex and induces the exchange of GDP to GTP. It remains bound to the aminoacyl-tRNA.EF-Tu.GTP complex up to the GTP hydrolysis stage on the ribosome. This Anaeromyxobacter sp. (strain Fw109-5) protein is Elongation factor Ts.